The primary structure comprises 88 residues: Antitoxin VapB3 (88 aa).

Its function is as follows. Antitoxin component of a type II toxin-antitoxin (TA) system. This chain is Antitoxin VapB3 (vapB3), found in Mycobacterium tuberculosis (strain CDC 1551 / Oshkosh).